The chain runs to 547 residues: ATP synthase subunit alpha (547 aa).

Residue 172-179 participates in ATP binding; sequence GDRKTGKT.

This sequence belongs to the ATPase alpha/beta chains family. In terms of assembly, F-type ATPases have 2 components, CF(1) - the catalytic core - and CF(0) - the membrane proton channel. CF(1) has five subunits: alpha(3), beta(3), gamma(1), delta(1), epsilon(1). CF(0) has three main subunits: a(1), b(2) and c(9-12). The alpha and beta chains form an alternating ring which encloses part of the gamma chain. CF(1) is attached to CF(0) by a central stalk formed by the gamma and epsilon chains, while a peripheral stalk is formed by the delta and b chains.

It localises to the cell membrane. The enzyme catalyses ATP + H2O + 4 H(+)(in) = ADP + phosphate + 5 H(+)(out). In terms of biological role, produces ATP from ADP in the presence of a proton gradient across the membrane. The alpha chain is a regulatory subunit. The sequence is that of ATP synthase subunit alpha from Rhodococcus jostii (strain RHA1).